The sequence spans 306 residues: Leucine-rich repeat-containing protein 75B (306 aa).

The disordered stretch occupies residues 1–22; sequence MGARLGRRARADAPAAPSAGPA. Over residues 12 to 22 the composition is skewed to low complexity; that stretch reads DAPAAPSAGPA. LRR repeat units follow at residues 173–186 and 198–211; these read LVVL…LSDE and LPRL…GNRL.

It belongs to the LRRC75 family.

May suppress myogenic differentiation by modulating MYOG expression and Erk1/2 signaling. The sequence is that of Leucine-rich repeat-containing protein 75B from Mus musculus (Mouse).